Here is a 319-residue protein sequence, read N- to C-terminus: MRHLLSVTDLDRTAATELLDEAERFEQALLGREVHKLPTLRGRTVMTVFYENSTRTRVSFEVAGKWMSADVINVSASSSSVSKGESLRDTALTLHAAGADALIVRHPASGAAHQIARWMDGWARESGRSHGPAIVNAGDGMHEHPTQALLDALTLRQRLGDIEGKRVVIVGDILHSRVARSNVFLLHTLGAEVVLVAPRTLLPVGVQSWPARVSHHLDAELPGADAVLMLRVQAERMNGGFFPSAREYSVNYGLSERRLALLAEHAVVMHPGPMLRGMEIASAVADSPQAAVLQQVTNGVHLRMAVLFRLLVGAQEAIA.

Positions 55 and 56 each coordinate carbamoyl phosphate. K83 contacts L-aspartate. Residues R105, H144, and Q147 each contribute to the carbamoyl phosphate site. The L-aspartate site is built by R177 and R231. Carbamoyl phosphate contacts are provided by G272 and P273.

It belongs to the aspartate/ornithine carbamoyltransferase superfamily. ATCase family. As to quaternary structure, heterododecamer (2C3:3R2) of six catalytic PyrB chains organized as two trimers (C3), and six regulatory PyrI chains organized as three dimers (R2).

The enzyme catalyses carbamoyl phosphate + L-aspartate = N-carbamoyl-L-aspartate + phosphate + H(+). It functions in the pathway pyrimidine metabolism; UMP biosynthesis via de novo pathway; (S)-dihydroorotate from bicarbonate: step 2/3. Functionally, catalyzes the condensation of carbamoyl phosphate and aspartate to form carbamoyl aspartate and inorganic phosphate, the committed step in the de novo pyrimidine nucleotide biosynthesis pathway. The sequence is that of Aspartate carbamoyltransferase catalytic subunit from Nocardia farcinica (strain IFM 10152).